Reading from the N-terminus, the 248-residue chain is 2,3-bisphosphoglycerate-dependent phosphoglycerate mutase (248 aa).

Substrate is bound by residues 10–17 (RHGQSEWN), 23–24 (TG), arginine 62, 89–92 (ERHY), lysine 100, 116–117 (RR), and 183–184 (GN). Histidine 11 (tele-phosphohistidine intermediate) is an active-site residue. Glutamate 89 acts as the Proton donor/acceptor in catalysis.

This sequence belongs to the phosphoglycerate mutase family. BPG-dependent PGAM subfamily.

The catalysed reaction is (2R)-2-phosphoglycerate = (2R)-3-phosphoglycerate. It participates in carbohydrate degradation; glycolysis; pyruvate from D-glyceraldehyde 3-phosphate: step 3/5. In terms of biological role, catalyzes the interconversion of 2-phosphoglycerate and 3-phosphoglycerate. The chain is 2,3-bisphosphoglycerate-dependent phosphoglycerate mutase from Corynebacterium glutamicum (strain ATCC 13032 / DSM 20300 / JCM 1318 / BCRC 11384 / CCUG 27702 / LMG 3730 / NBRC 12168 / NCIMB 10025 / NRRL B-2784 / 534).